Consider the following 341-residue polypeptide: UDP-3-O-acylglucosamine N-acyltransferase (341 aa).

H241 functions as the Proton acceptor in the catalytic mechanism.

It belongs to the transferase hexapeptide repeat family. LpxD subfamily. In terms of assembly, homotrimer.

It carries out the reaction a UDP-3-O-[(3R)-3-hydroxyacyl]-alpha-D-glucosamine + a (3R)-hydroxyacyl-[ACP] = a UDP-2-N,3-O-bis[(3R)-3-hydroxyacyl]-alpha-D-glucosamine + holo-[ACP] + H(+). Its pathway is bacterial outer membrane biogenesis; LPS lipid A biosynthesis. Catalyzes the N-acylation of UDP-3-O-acylglucosamine using 3-hydroxyacyl-ACP as the acyl donor. Is involved in the biosynthesis of lipid A, a phosphorylated glycolipid that anchors the lipopolysaccharide to the outer membrane of the cell. The polypeptide is UDP-3-O-acylglucosamine N-acyltransferase (Haemophilus ducreyi (strain 35000HP / ATCC 700724)).